Here is a 126-residue protein sequence, read N- to C-terminus: Small ribosomal subunit protein uS8 (126 aa).

It belongs to the universal ribosomal protein uS8 family. As to quaternary structure, part of the 30S ribosomal subunit. Contacts proteins S5 and S12.

Its function is as follows. One of the primary rRNA binding proteins, it binds directly to 16S rRNA central domain where it helps coordinate assembly of the platform of the 30S subunit. The protein is Small ribosomal subunit protein uS8 of Nitratidesulfovibrio vulgaris (strain ATCC 29579 / DSM 644 / CCUG 34227 / NCIMB 8303 / VKM B-1760 / Hildenborough) (Desulfovibrio vulgaris).